A 140-amino-acid chain; its full sequence is Transcription antitermination protein NusB (140 aa).

It belongs to the NusB family.

Its function is as follows. Involved in transcription antitermination. Required for transcription of ribosomal RNA (rRNA) genes. Binds specifically to the boxA antiterminator sequence of the ribosomal RNA (rrn) operons. The protein is Transcription antitermination protein NusB of Pseudoalteromonas atlantica (strain T6c / ATCC BAA-1087).